The primary structure comprises 196 residues: Transmembrane protein 126A (196 aa).

The Mitochondrial matrix portion of the chain corresponds to 1–34; sequence MESHKPSTNKDDLIFNIIPRKIKQLPESDRNLLE. The helical transmembrane segment at 35 to 55 threads the bilayer; sequence YGSAYIGLNAAFGGLIANSLF. Residues 56–57 are Mitochondrial intermembrane-facing; the sequence is RR. The chain crosses the membrane as a helical span at residues 58 to 78; sequence ILNVTQARVASSLPMAVIPFL. Residues 79-106 are Mitochondrial matrix-facing; it reads TANLSYHSFVSLPLSTGNLNCEICTTTR. The helical transmembrane segment at 107-127 threads the bilayer; it reads GTLVGFVLGGLYPILLAIPVN. Topologically, residues 128 to 159 are mitochondrial intermembrane; sequence GGLAARYESSPLPQRGNIFNYWITISKPVFRK. A helical membrane pass occupies residues 160 to 176; that stretch reads MLFPTLLQTAFAAYLGS. The Mitochondrial matrix segment spans residues 177 to 196; sequence RQYKLLIKALQLPEPDLEIQ.

This sequence belongs to the TMEM126 family. As to quaternary structure, interacts with OXA1L; promoting cotranslational quality control in mitochondria.

It is found in the mitochondrion inner membrane. Functionally, protein required for the cotranslational protein quality control in the inner membrane of the mitochondria. Associates with newly synthesized polypeptides and may act as a chaperone that cooperates with OXA1L for the insertion of newly synthesized mitochondrial proteins into the inner membrane. Required for the assembly of the ND4 module of mitochondrial complex I. The chain is Transmembrane protein 126A (Tmem126a) from Rattus norvegicus (Rat).